The sequence spans 142 residues: Large ribosomal subunit protein uL13 (142 aa).

This sequence belongs to the universal ribosomal protein uL13 family. As to quaternary structure, part of the 50S ribosomal subunit.

In terms of biological role, this protein is one of the early assembly proteins of the 50S ribosomal subunit, although it is not seen to bind rRNA by itself. It is important during the early stages of 50S assembly. The polypeptide is Large ribosomal subunit protein uL13 (Stutzerimonas stutzeri (strain A1501) (Pseudomonas stutzeri)).